Here is a 213-residue protein sequence, read N- to C-terminus: GrpE protein homolog, mitochondrial (213 aa).

The tract at residues 35–55 (STEKQPEEATEQKATESSPEV) is disordered. A compositionally biased stretch (basic and acidic residues) spans 38-55 (KQPEEATEQKATESSPEV).

It belongs to the GrpE family. Probable component of the PAM complex at least composed of a mitochondrial HSP70 protein, Roe1, TIM44, blp/TIM16 and TIM14.

Its subcellular location is the mitochondrion matrix. In terms of biological role, essential component of the PAM complex, a complex required for the translocation of transit peptide-containing proteins from the inner membrane into the mitochondrial matrix in an ATP-dependent manner. Seems to control the nucleotide-dependent binding of mitochondrial HSP70 to substrate proteins. The polypeptide is GrpE protein homolog, mitochondrial (Roe1) (Drosophila melanogaster (Fruit fly)).